The following is a 38-amino-acid chain: RapG inhibitor (38 aa).

Residues 1–33 (MKRFLIGAGVAAVILSGWFIADHQTHSQEMKVA) constitute a propeptide that is removed on maturation.

It belongs to the Phr family. In terms of processing, contains a predicted signal peptide cleavage site in the N-terminal region, however the propeptide is probably subject to only one processing event, at the N-terminal end of the mature peptide.

Its subcellular location is the secreted. The protein localises to the cytoplasm. Its function is as follows. Signaling molecule involved in the regulation of expression of DegU-controlled genes. Secreted during production, but the mature peptide acts intracellularly, indicating that it needs to be imported into the cell to function. Stimulates the DegU-dependent expression of aprE, an extracellular alkaline protease. Acts by inhibiting RapG activity. At high concentrations, represses the DegS-dependent aprE expression. The sequence is that of RapG inhibitor (phrG) from Bacillus subtilis (strain 168).